Here is a 216-residue protein sequence, read N- to C-terminus: Twisted gastrulation protein homolog 1-A (216 aa).

The first 25 residues, 1–25 (MKPSFLHIPAAALLLCSLWILPIYC), serve as a signal peptide directing secretion. 3 N-linked (GlcNAc...) asparagine glycosylation sites follow: N52, N81, and N145.

This sequence belongs to the twisted gastrulation protein family. In terms of assembly, binds directly to bmp2, bmp4 and bmp7 and can form a ternary complex with bmps and chordin, thus preventing the binding of bmps to their cell surface receptors. In terms of tissue distribution, posterior defects are induced by overexpression. This may arise through alteration of bmp4 or chrd function in the developing tailbud region.

It is found in the secreted. Involved in dorsal-ventral patterning, permitting peak BMP signaling by antagonizing the residual anti-BMP activity of the cleavage products of chrd. Functions to promote the formation of ventral mesoderm by increasing the activity of bmp7 and other BMPS. Seems to antagonize BMP signaling by forming ternary complexes with chrd and BMPs, thereby preventing BMPs from binding to their receptors. In addition to the anti-BMP function, also has pro-BMP activity, partly mediated by cleavage and degradation of chrd, which releases BMPs from ternary complexes. May be an important modulator of BMP-regulated cartilage development and chondrocyte differentiation. This chain is Twisted gastrulation protein homolog 1-A (twsg1-a), found in Xenopus laevis (African clawed frog).